The sequence spans 101 residues: Small ribosomal subunit protein uS14 (101 aa).

This sequence belongs to the universal ribosomal protein uS14 family. As to quaternary structure, part of the 30S ribosomal subunit. Contacts proteins S3 and S10.

Binds 16S rRNA, required for the assembly of 30S particles and may also be responsible for determining the conformation of the 16S rRNA at the A site. This Leptothrix cholodnii (strain ATCC 51168 / LMG 8142 / SP-6) (Leptothrix discophora (strain SP-6)) protein is Small ribosomal subunit protein uS14.